A 106-amino-acid chain; its full sequence is UPF0060 membrane protein Rleg2_1018 (106 aa).

The next 4 membrane-spanning stretches (helical) occupy residues 4–24, 30–50, 58–78, and 86–106; these read IIYA…WAWL, VWWL…LTLV, TFAA…WLVE, and DIGG…GPRG.

The protein belongs to the UPF0060 family.

The protein localises to the cell inner membrane. This Rhizobium leguminosarum bv. trifolii (strain WSM2304) protein is UPF0060 membrane protein Rleg2_1018.